Here is a 497-residue protein sequence, read N- to C-terminus: L-arabinose isomerase (497 aa).

Residues Glu306, Glu331, His348, and His447 each coordinate Mn(2+).

It belongs to the arabinose isomerase family. The cofactor is Mn(2+).

The catalysed reaction is beta-L-arabinopyranose = L-ribulose. It participates in carbohydrate degradation; L-arabinose degradation via L-ribulose; D-xylulose 5-phosphate from L-arabinose (bacterial route): step 1/3. In terms of biological role, catalyzes the conversion of L-arabinose to L-ribulose. This chain is L-arabinose isomerase, found in Halalkalibacterium halodurans (strain ATCC BAA-125 / DSM 18197 / FERM 7344 / JCM 9153 / C-125) (Bacillus halodurans).